Consider the following 170-residue polypeptide: MSTAGDGERGTVGQEDSAAARPFRFSPEPTLEDIRRLHAEFAAERDWEQFHQPRNLLLALVGEVGELAELFQWKSDTEPGPQAWPPKERAALQEELSDVLIYLVALAARCHVDLPQAVISKMDTNRQRYPVHLSRGSACKYTDLPRGTISENQAVGAGDPASELRDQAST.

The disordered stretch occupies residues 1–25 (MSTAGDGERGTVGQEDSAAARPFRF). Ser-2 is subject to N-acetylserine. The residue at position 2 (Ser-2) is a Phosphoserine. Substrate is bound by residues His-38 and 47–51 (WEQFH). Glu-63 and Glu-66 together coordinate Mg(2+). Substrate is bound at residue Trp-73. Residues Glu-95 and Asp-98 each contribute to the Mg(2+) site. Residue Tyr-102 participates in substrate binding. Residues 150 to 170 (SENQAVGAGDPASELRDQAST) form a disordered region.

As to quaternary structure, homotetramer. Mg(2+) serves as cofactor. In terms of tissue distribution, ubiquitous. Highly expressed in heart, liver, skeletal muscle, cerebellum, brain, and salivary gland.

It is found in the cytoplasm. It localises to the cytosol. It catalyses the reaction dCTP + H2O = dCMP + diphosphate + H(+). With respect to regulation, inhibited by divalent calcium or cadmium ions. Its function is as follows. Hydrolyzes deoxynucleoside triphosphates (dNTPs) to the corresponding nucleoside monophosphates. Has a strong preference for dCTP and its analogs including 5-iodo-dCTP and 5-methyl-dCTP for which it may even have a higher efficiency. May protect DNA or RNA against the incorporation of these genotoxic nucleotide analogs through their catabolism. The polypeptide is dCTP pyrophosphatase 1 (Mus musculus (Mouse)).